Here is a 425-residue protein sequence, read N- to C-terminus: Serine--tRNA ligase (425 aa).

Position 228–230 (T228–E230) interacts with L-serine. An ATP-binding site is contributed by R259–E261. E282 is an L-serine binding site. E346–S349 serves as a coordination point for ATP. S382 is a binding site for L-serine.

It belongs to the class-II aminoacyl-tRNA synthetase family. Type-1 seryl-tRNA synthetase subfamily. Homodimer. The tRNA molecule binds across the dimer.

The protein localises to the cytoplasm. It catalyses the reaction tRNA(Ser) + L-serine + ATP = L-seryl-tRNA(Ser) + AMP + diphosphate + H(+). It carries out the reaction tRNA(Sec) + L-serine + ATP = L-seryl-tRNA(Sec) + AMP + diphosphate + H(+). Its pathway is aminoacyl-tRNA biosynthesis; selenocysteinyl-tRNA(Sec) biosynthesis; L-seryl-tRNA(Sec) from L-serine and tRNA(Sec): step 1/1. Catalyzes the attachment of serine to tRNA(Ser). Is also able to aminoacylate tRNA(Sec) with serine, to form the misacylated tRNA L-seryl-tRNA(Sec), which will be further converted into selenocysteinyl-tRNA(Sec). The protein is Serine--tRNA ligase of Rickettsia akari (strain Hartford).